Here is a 672-residue protein sequence, read N- to C-terminus: 2,4-dienoyl-CoA reductase [(2E)-enoyl-CoA-producing] (672 aa).

Residues 25-27, Gly59, and Gln101 each bind FMN; that span reads SMH. The Proton donor role is filled by Tyr167. Arg176 is a substrate binding site. Residue Arg215 coordinates FMN. Residue 253 to 256 coordinates substrate; it reads HEAR. FMN-binding positions include Arg289 and 311–312; that span reads AR. [4Fe-4S] cluster-binding residues include Cys335 and Cys338. Gln340 contacts FAD. Gln340 lines the NADP(+) pocket. Residues Cys342 and Cys354 each contribute to the [4Fe-4S] cluster site. FAD contacts are provided by Ala385, Asp404, Gln412, Lys422, and Val449. 563–564 serves as a coordination point for NADP(+); sequence RK. The substrate site is built by Lys567 and Trp578. FAD is bound by residues Gly649 and 656–658; that span reads LDA. NADP(+) is bound at residue 654 to 656; sequence MEL.

The protein in the N-terminal section; belongs to the NADH:flavin oxidoreductase/NADH oxidase family. As to quaternary structure, monomer. FMN serves as cofactor. FAD is required as a cofactor. The cofactor is [4Fe-4S] cluster.

The enzyme catalyses a 4,5-saturated-(2E)-enoyl-CoA + NADP(+) = a (2E,4E)-dienoyl-CoA + NADPH + H(+). It carries out the reaction a (2E,4Z)-dienoyl-CoA + NADPH + H(+) = a 4,5-saturated-(2E)-enoyl-CoA + NADP(+). It catalyses the reaction (2E)-decenoyl-CoA + NADP(+) = (2E,4E)-decadienoyl-CoA + NADPH + H(+). The catalysed reaction is (2E)-decenoyl-CoA + NADP(+) = (2E,4Z)-decadienoyl-CoA + NADPH + H(+). It functions in the pathway lipid metabolism; fatty acid beta-oxidation. Is non-competitively inhibited by NADH. Its function is as follows. Functions as an auxiliary enzyme in the beta-oxidation of unsaturated fatty acids with double bonds at even carbon positions. Catalyzes the NADPH-dependent reduction of the C4-C5 double bond of the acyl chain of 2,4-dienoyl-CoA to yield 2-trans-enoyl-CoA. Acts on both isomers, 2-trans,4-cis- and 2-trans,4-trans-decadienoyl-CoA, with almost equal efficiency. Is not active with NADH instead of NADPH. Does not show cis-&gt;trans isomerase activity. The sequence is that of 2,4-dienoyl-CoA reductase [(2E)-enoyl-CoA-producing] from Escherichia coli (strain K12).